The following is a 250-amino-acid chain: Triosephosphate isomerase (250 aa).

9–11 contacts substrate; sequence NWK. His-96 acts as the Electrophile in catalysis. The active-site Proton acceptor is the Glu-166. Substrate contacts are provided by residues Gly-172, Ser-212, and 233-234; that span reads GG.

This sequence belongs to the triosephosphate isomerase family. As to quaternary structure, homodimer.

It localises to the cytoplasm. The enzyme catalyses D-glyceraldehyde 3-phosphate = dihydroxyacetone phosphate. It participates in carbohydrate biosynthesis; gluconeogenesis. Its pathway is carbohydrate degradation; glycolysis; D-glyceraldehyde 3-phosphate from glycerone phosphate: step 1/1. Involved in the gluconeogenesis. Catalyzes stereospecifically the conversion of dihydroxyacetone phosphate (DHAP) to D-glyceraldehyde-3-phosphate (G3P). The protein is Triosephosphate isomerase of Chlorobium luteolum (strain DSM 273 / BCRC 81028 / 2530) (Pelodictyon luteolum).